Here is a 792-residue protein sequence, read N- to C-terminus: Kinesin-associated protein 3 (792 aa).

Serine 60 bears the Phosphoserine mark. Basic and acidic residues predominate over residues 103–119; the sequence is LSGKEKKEKSSKPKDPP. Residues 103–124 form a disordered region; it reads LSGKEKKEKSSKPKDPPPFEGM. 5 ARM repeats span residues 333–373, 374–412, 494–533, 578–620, and 621–662; these read FMEN…NLSF, DTGL…HISM, DGPT…NLTI, DDSC…QMVF, and HQAT…IIAE.

As to quaternary structure, heterotrimer of KIFAP3, KIF3A and KIF3B. Interacts with RAP1GDS1/SMG GDS. Interacts with SMC3 subunit of the cohesin complex. Post-translationally, phosphorylated on tyrosine residues by SRC in vitro; this reduces the binding affinity of the protein for RAP1GDS1.

Functionally, involved in tethering the chromosomes to the spindle pole and in chromosome movement. Binds to the tail domain of the KIF3A/KIF3B heterodimer to form a heterotrimeric KIF3 complex and may regulate the membrane binding of this complex. The polypeptide is Kinesin-associated protein 3 (KIFAP3) (Homo sapiens (Human)).